The primary structure comprises 303 residues: Aspartate carbamoyltransferase catalytic subunit (303 aa).

Carbamoyl phosphate is bound by residues R51 and T52. K80 provides a ligand contact to L-aspartate. 3 residues coordinate carbamoyl phosphate: R101, H129, and Q132. Residues R162 and R221 each contribute to the L-aspartate site. L260 and P261 together coordinate carbamoyl phosphate.

Belongs to the aspartate/ornithine carbamoyltransferase superfamily. ATCase family. As to quaternary structure, heterooligomer of catalytic and regulatory chains.

The enzyme catalyses carbamoyl phosphate + L-aspartate = N-carbamoyl-L-aspartate + phosphate + H(+). It participates in pyrimidine metabolism; UMP biosynthesis via de novo pathway; (S)-dihydroorotate from bicarbonate: step 2/3. Its function is as follows. Catalyzes the condensation of carbamoyl phosphate and aspartate to form carbamoyl aspartate and inorganic phosphate, the committed step in the de novo pyrimidine nucleotide biosynthesis pathway. In Saccharolobus islandicus (strain Y.N.15.51 / Yellowstone #2) (Sulfolobus islandicus), this protein is Aspartate carbamoyltransferase catalytic subunit.